A 414-amino-acid chain; its full sequence is Glucose-1-phosphate adenylyltransferase (414 aa).

Alpha-D-glucose 1-phosphate contacts are provided by residues Gly-164, 181–182, and Ser-199; that span reads EK.

Belongs to the bacterial/plant glucose-1-phosphate adenylyltransferase family. In terms of assembly, homotetramer.

It catalyses the reaction alpha-D-glucose 1-phosphate + ATP + H(+) = ADP-alpha-D-glucose + diphosphate. Its pathway is glycan biosynthesis; glycogen biosynthesis. Functionally, involved in the biosynthesis of ADP-glucose, a building block required for the elongation reactions to produce glycogen. Catalyzes the reaction between ATP and alpha-D-glucose 1-phosphate (G1P) to produce pyrophosphate and ADP-Glc. The protein is Glucose-1-phosphate adenylyltransferase of Kocuria rhizophila (strain ATCC 9341 / DSM 348 / NBRC 103217 / DC2201).